We begin with the raw amino-acid sequence, 487 residues long: Malonate-semialdehyde dehydrogenase (487 aa).

Residues Ala150, Phe152, Lys176, Glu179, Arg180, Ser229, and Thr251 each coordinate NAD(+). Residue Cys284 is the Nucleophile of the active site. Glu382 lines the NAD(+) pocket.

It belongs to the aldehyde dehydrogenase family. IolA subfamily. Homotetramer.

The enzyme catalyses 3-oxopropanoate + NAD(+) + CoA + H2O = hydrogencarbonate + acetyl-CoA + NADH + H(+). The catalysed reaction is 2-methyl-3-oxopropanoate + NAD(+) + CoA + H2O = propanoyl-CoA + hydrogencarbonate + NADH + H(+). It functions in the pathway polyol metabolism; myo-inositol degradation into acetyl-CoA; acetyl-CoA from myo-inositol: step 7/7. Functionally, catalyzes the oxidation of malonate semialdehyde (MSA) and methylmalonate semialdehyde (MMSA) into acetyl-CoA and propanoyl-CoA, respectively. Is involved in a myo-inositol catabolic pathway. Bicarbonate, and not CO2, is the end-product of the enzymatic reaction. This Bacillus subtilis (strain 168) protein is Malonate-semialdehyde dehydrogenase.